The following is an 80-amino-acid chain: UPF0270 protein AHA_0994 (80 aa).

It belongs to the UPF0270 family.

The polypeptide is UPF0270 protein AHA_0994 (Aeromonas hydrophila subsp. hydrophila (strain ATCC 7966 / DSM 30187 / BCRC 13018 / CCUG 14551 / JCM 1027 / KCTC 2358 / NCIMB 9240 / NCTC 8049)).